The sequence spans 204 residues: Nascent polypeptide-associated complex subunit alpha-like protein 3 (204 aa).

Residues 1–23 show a composition bias toward basic and acidic residues; sequence MTAEQKVELAAKLEEQKIDLDKP. Disordered regions lie at residues 1–68 and 141–165; these read MTAE…AMLK and GETS…EEGV. Positions 24–43 are enriched in acidic residues; the sequence is EVEDDDDNDEDDSEDDDEAE. S36 is modified (phosphoserine). The segment covering 44-59 has biased composition (basic and acidic residues); it reads GHDGEAGGRSKQSRSE. The NAC-A/B domain maps to 56–121; sequence SRSEKKSRKA…AKIEDLSSQL (66 aa). Residues 141-152 are compositionally biased toward low complexity; sequence GETSSAATAAAV. The segment covering 153 to 164 has biased composition (acidic residues); sequence QDDDDEEVDEEG. One can recognise a UBA domain in the interval 159–204; sequence EVDEEGVEPKDIELVMTQAGVSKPRAVKALKLANGDIVSAIMELTT.

The protein belongs to the NAC-alpha family.

Its function is as follows. May promote appropriate targeting of ribosome-nascent polypeptide complexes. The chain is Nascent polypeptide-associated complex subunit alpha-like protein 3 from Arabidopsis thaliana (Mouse-ear cress).